The sequence spans 498 residues: Probable cytosol aminopeptidase (498 aa).

Mn(2+) is bound by residues Lys-263 and Asp-268. Lys-275 is an active-site residue. Residues Asp-286, Asp-345, and Glu-347 each coordinate Mn(2+). Arg-349 is a catalytic residue.

This sequence belongs to the peptidase M17 family. It depends on Mn(2+) as a cofactor.

It localises to the cytoplasm. It carries out the reaction Release of an N-terminal amino acid, Xaa-|-Yaa-, in which Xaa is preferably Leu, but may be other amino acids including Pro although not Arg or Lys, and Yaa may be Pro. Amino acid amides and methyl esters are also readily hydrolyzed, but rates on arylamides are exceedingly low.. The catalysed reaction is Release of an N-terminal amino acid, preferentially leucine, but not glutamic or aspartic acids.. In terms of biological role, presumably involved in the processing and regular turnover of intracellular proteins. Catalyzes the removal of unsubstituted N-terminal amino acids from various peptides. This chain is Probable cytosol aminopeptidase, found in Rhodopseudomonas palustris (strain BisA53).